Consider the following 313-residue polypeptide: Homoserine O-acetyltransferase (313 aa).

C142 (acyl-thioester intermediate) is an active-site residue. Residues K163 and S191 each coordinate substrate. The active-site Proton acceptor is H234. Residue E236 is part of the active site. R248 contributes to the substrate binding site.

Belongs to the MetA family.

It is found in the cytoplasm. It carries out the reaction L-homoserine + acetyl-CoA = O-acetyl-L-homoserine + CoA. The protein operates within amino-acid biosynthesis; L-methionine biosynthesis via de novo pathway; O-acetyl-L-homoserine from L-homoserine: step 1/1. Transfers an acetyl group from acetyl-CoA to L-homoserine, forming acetyl-L-homoserine. The protein is Homoserine O-acetyltransferase of Streptococcus sanguinis (strain SK36).